Here is a 265-residue protein sequence, read N- to C-terminus: Hemin import ATP-binding protein HmuV (265 aa).

In terms of domain architecture, ABC transporter spans 10–247 (LVARHLRFQT…ETLAHWYRAD (238 aa)). Residue 42–49 (GPNGAGKS) participates in ATP binding.

The protein belongs to the ABC transporter superfamily. Heme (hemin) importer (TC 3.A.1.14.5) family. As to quaternary structure, the complex is composed of two ATP-binding proteins (HmuV), two transmembrane proteins (HmuU) and a solute-binding protein (HmuT).

It is found in the cell inner membrane. Part of the ABC transporter complex HmuTUV involved in hemin import. Responsible for energy coupling to the transport system. This chain is Hemin import ATP-binding protein HmuV, found in Pectobacterium atrosepticum (strain SCRI 1043 / ATCC BAA-672) (Erwinia carotovora subsp. atroseptica).